We begin with the raw amino-acid sequence, 548 residues long: Glycosyl hydrolase family 109 protein 3 (548 aa).

A signal peptide spans 1–21 (MKLKKLLLSVLMLLSISGLQA). NAD(+)-binding positions include 71-72 (MR), D93, 141-144 (WNHH), 161-162 (EV), and N190. Y219 is a substrate binding site. Residue 240–244 (DNLHW) participates in NAD(+) binding. Residues R245, 257 to 260 (YATH), and Y335 contribute to the substrate site. Residue Y257 participates in NAD(+) binding.

The protein belongs to the Gfo/Idh/MocA family. Glycosyl hydrolase 109 subfamily. NAD(+) is required as a cofactor.

In terms of biological role, glycosidase. This is Glycosyl hydrolase family 109 protein 3 from Phocaeicola vulgatus (strain ATCC 8482 / DSM 1447 / JCM 5826 / CCUG 4940 / NBRC 14291 / NCTC 11154) (Bacteroides vulgatus).